Here is a 130-residue protein sequence, read N- to C-terminus: Small ribosomal subunit protein bS6 (130 aa).

The interval 96–130 (VTEASPMAKARDERDSRRSPSDDRIEEESAEENAE) is disordered. Residues 104-118 (KARDERDSRRSPSDD) are compositionally biased toward basic and acidic residues. A compositionally biased stretch (acidic residues) spans 119–130 (RIEEESAEENAE).

This sequence belongs to the bacterial ribosomal protein bS6 family.

Functionally, binds together with bS18 to 16S ribosomal RNA. This chain is Small ribosomal subunit protein bS6, found in Shewanella denitrificans (strain OS217 / ATCC BAA-1090 / DSM 15013).